The chain runs to 173 residues: UPF0598 protein F59C6.12 (173 aa).

The protein belongs to the UPF0598 family.

The protein is UPF0598 protein F59C6.12 of Caenorhabditis elegans.